The following is a 569-amino-acid chain: Beta-galactoside-specific lectin 3 (569 aa).

The N-terminal stretch at methionine 1–serine 33 is a signal peptide. Glutamate 198 is an active-site residue. Cystine bridges form between cysteine 280–cysteine 311, cysteine 327–cysteine 346, and cysteine 370–cysteine 387. Positions glutamate 288–aspartate 307 are cleaved as a propeptide — connecting peptide. In terms of domain architecture, Ricin B-type lectin 1 spans serine 314–glycine 441. Residue aspartate 329–arginine 331 coordinates D-galactose. Residues asparagine 402 and asparagine 442 are each glycosylated (N-linked (GlcNAc...) asparagine). The Ricin B-type lectin 2 domain occupies alanine 445–valine 568. 2 cysteine pairs are disulfide-bonded: cysteine 458–cysteine 471 and cysteine 497–cysteine 514. A D-galactose-binding site is contributed by aspartate 541–alanine 543.

Belongs to the ribosome-inactivating protein family. Type 2 RIP subfamily. Disulfide-linked dimer of A and B chains.

The enzyme catalyses Endohydrolysis of the N-glycosidic bond at one specific adenosine on the 28S rRNA.. In terms of biological role, the A chain is responsible for inhibiting protein synthesis through the catalytic inactivation of 60S ribosomal subunits by removing adenine from position 4,324 of 28S rRNA. The B chain binds to cell receptors and probably facilitates the entry into the cell of the A chain; B chains are also responsible for cell agglutination (lectin activity). Inhibits growth of the human tumor cell line Molt4. The chain is Beta-galactoside-specific lectin 3 from Viscum album (European mistletoe).